A 543-amino-acid polypeptide reads, in one-letter code: Chaperonin GroEL (543 aa).

Residues 29–32 (TLGP), 86–90 (DGTTT), Gly413, 477–479 (DAL), and Asp493 contribute to the ATP site. A disordered region spans residues 524–543 (EKDKPEMPGGAPGMGMGGMY). Gly residues predominate over residues 533–543 (GAPGMGMGGMY).

It belongs to the chaperonin (HSP60) family. Forms a cylinder of 14 subunits composed of two heptameric rings stacked back-to-back. Interacts with the co-chaperonin GroES.

The protein localises to the cytoplasm. It catalyses the reaction ATP + H2O + a folded polypeptide = ADP + phosphate + an unfolded polypeptide.. Functionally, together with its co-chaperonin GroES, plays an essential role in assisting protein folding. The GroEL-GroES system forms a nano-cage that allows encapsulation of the non-native substrate proteins and provides a physical environment optimized to promote and accelerate protein folding. The sequence is that of Chaperonin GroEL from Clostridium acetobutylicum (strain ATCC 824 / DSM 792 / JCM 1419 / IAM 19013 / LMG 5710 / NBRC 13948 / NRRL B-527 / VKM B-1787 / 2291 / W).